Reading from the N-terminus, the 319-residue chain is MNGLLALAFAAGMLAPVNPCGFALLPAWITAALGDSDASPLPVRLTRALRSGAALTLGFAGTLAAAGLIVSAGARALIQAAPWLGLATGILLLLLGAVMLTGRTPSLRLHLTTSTRRSAGPPTARRMAAFGVGYAAASLSCTFGVLLAVIAQAQATASFAGLLAVFAAYAAGSAAVLLLVAVTTAAAGAALTRKITALARHGTRITAAVLVLTGAYLAWYWYPAATGGATTAAPGGGLATFSATATAWIQAHTTAIAVTAVVVVLAVAAAAIRHRTRQPARHSTPTGTAPSAAAADDCCAPLPVPTPASTDRDSDGHCC.

Residues Cys298, Cys299, Cys318, and Cys319 each coordinate Hg(2+).

This Streptomyces lividans protein is Mercury resistance probable Hg transport protein.